The chain runs to 233 residues: Synaptogyrin-1 (233 aa).

Met-1 carries the post-translational modification N-acetylmethionine. Topologically, residues 1 to 23 are cytoplasmic; that stretch reads MEGGAYGAGKAGGAFDPYTLVRQ. An MARVEL domain is found at 20 to 173; that stretch reads LVRQPHTILR…QAVLAFQRYQ (154 aa). A helical membrane pass occupies residues 24-44; sequence PHTILRVVSWLFSIVVFGSIV. Topologically, residues 45–71 are lumenal; the sequence is NEGYLNSASEGEEFCIYNRNPNACSYG. Residues 72–92 traverse the membrane as a helical segment; the sequence is VAVGVLAFLTCLLYLALDVYF. Residues 93–103 are Cytoplasmic-facing; sequence PQISSVKDRKK. A helical transmembrane segment spans residues 104–124; that stretch reads AVLSDIGVSAFWAFLWFVGFC. Residues 125–148 lie on the Lumenal side of the membrane; sequence YLANQWQVSKPKDNPLNEGTDAAR. A helical membrane pass occupies residues 149 to 169; that stretch reads AAIAFSFFSIFTWAGQAVLAF. Residues 170–233 lie on the Cytoplasmic side of the membrane; it reads QRYQIGADSA…EPQGYQSQGY (64 aa). The disordered stretch occupies residues 194–233; that stretch reads MPYAPYVEPTGPDPAGMGGTYQQPANTFDTEPQGYQSQGY. Residues 213-233 show a composition bias toward polar residues; sequence TYQQPANTFDTEPQGYQSQGY.

Belongs to the synaptogyrin family.

It is found in the cytoplasmic vesicle. The protein localises to the secretory vesicle. The protein resides in the synaptic vesicle membrane. It localises to the melanosome. In terms of biological role, may play a role in regulated exocytosis. Modulates the localization of synaptophysin/SYP into synaptic-like microvesicles and may therefore play a role in synaptic-like microvesicle formation and/or maturation. Involved in the regulation of short-term and long-term synaptic plasticity. The chain is Synaptogyrin-1 from Homo sapiens (Human).